A 557-amino-acid polypeptide reads, in one-letter code: Estrogen receptor beta (557 aa).

A modulating region spans residues Met1–Tyr154. 2 consecutive NR C4-type zinc fingers follow at residues Cys155–Cys175 and Cys191–Cys215. The nuclear receptor DNA-binding region spans Cys155 to Met220. The segment at Leu240–Lys268 is disordered. The region spanning Thr272–His508 is the NR LBD domain. Residues Ser513–Gln557 form a disordered region. Positions Gly539–Gln557 are enriched in polar residues.

The protein belongs to the nuclear hormone receptor family. NR3 subfamily. As to quaternary structure, binds DNA as a homodimer. Can form a heterodimer with ER-alpha.

It is found in the nucleus. In terms of biological role, binds estrogens with an affinity similar to that of ER-alpha, and activates expression of reporter genes containing estrogen response elements (ERE) in an estrogen-dependent manner. The polypeptide is Estrogen receptor beta (esr2) (Oreochromis niloticus (Nile tilapia)).